A 965-amino-acid chain; its full sequence is Villin-3 (965 aa).

Gelsolin-like repeat units follow at residues 27–79 (ENFE…DEAG), 150–190 (VHLK…QERA), 262–304 (GQVE…EERK), 401–452 (ANSK…EDQE), 533–573 (NKAL…EQQE), and 635–676 (FQVE…KEKQ). 2 stretches are compositionally biased toward low complexity: residues 769-780 (AFNSSSGRTSSP) and 808-828 (SSPS…ASQR). Disordered regions lie at residues 769 to 828 (AFNS…ASQR) and 840 to 906 (TAEK…GVTF). Positions 865–879 (EATEEATEAKEEEEV) are enriched in acidic residues. Position 880 is a phosphoserine (Ser-880). An HP domain is found at 900–965 (ETTGVTFTYE…DLLKKKFNLF (66 aa)).

The protein belongs to the villin/gelsolin family. Expressed in all tissues examined, including root hairs.

The protein localises to the cytoplasm. Its subcellular location is the cytoskeleton. In terms of biological role, binds actin and actin filament bundles in a Ca(2+)-insensitive manner, but severs actin filaments in a calcium-dependent manner, regardless of the presence or not of VLN1 (AC O81643). Acts redundantly with VLN2 (AC O81644) to generate thick actin filament bundles, to regulate directional organ growth and in sclerenchyma development. This Arabidopsis thaliana (Mouse-ear cress) protein is Villin-3.